The following is an 88-amino-acid chain: Cell division topological specificity factor (88 aa).

It belongs to the MinE family.

Functionally, prevents the cell division inhibition by proteins MinC and MinD at internal division sites while permitting inhibition at polar sites. This ensures cell division at the proper site by restricting the formation of a division septum at the midpoint of the long axis of the cell. The chain is Cell division topological specificity factor from Herminiimonas arsenicoxydans.